A 546-amino-acid polypeptide reads, in one-letter code: Chaperonin GroEL 1 (546 aa).

ATP contacts are provided by residues 30-33 (TLGP), Lys51, 87-91 (DGTTT), Gly415, 479-481 (NAA), and Asp495.

This sequence belongs to the chaperonin (HSP60) family. Forms a cylinder of 14 subunits composed of two heptameric rings stacked back-to-back. Interacts with the co-chaperonin GroES.

It localises to the cytoplasm. The enzyme catalyses ATP + H2O + a folded polypeptide = ADP + phosphate + an unfolded polypeptide.. In terms of biological role, together with its co-chaperonin GroES, plays an essential role in assisting protein folding. The GroEL-GroES system forms a nano-cage that allows encapsulation of the non-native substrate proteins and provides a physical environment optimized to promote and accelerate protein folding. This is Chaperonin GroEL 1 from Vibrio vulnificus (strain CMCP6).